Here is a 578-residue protein sequence, read N- to C-terminus: ATP-dependent RNA helicase CHR1 (578 aa).

Residues 1 to 95 (MDIFRILSRG…NETKAKEEEI (95 aa)) form a disordered region. Composition is skewed to basic and acidic residues over residues 44-53 (EVERETDFFH) and 78-94 (NKEE…KEEE). The Q motif signature appears at 131–159 (DMIGRFHINKKVLSNLIDNEFVEPTPIQC). A Helicase ATP-binding domain is found at 162–339 (IPITLNNRDL…HSIMKDPLRI (178 aa)). 175–182 (APTGSGKT) serves as a coordination point for ATP. Positions 286 to 289 (DEAD) match the DEAD box motif. One can recognise a Helicase C-terminal domain in the interval 350–514 (TIDQKLVFTG…GYSQWMEDMG (165 aa)). 2 stretches are compositionally biased toward basic and acidic residues: residues 517–531 (SKKE…EIQR) and 561–578 (ESKQ…EREE). Positions 517-578 (SKKEKKQIKT…ESHSNDEREE (62 aa)) are disordered.

It belongs to the DEAD box helicase family. DDX52/ROK1 subfamily. As to quaternary structure, interacts with the U3 snoRNA and is associated with the 90S and 40S pre-ribosomes.

It localises to the nucleus. Its subcellular location is the nucleolus. The catalysed reaction is ATP + H2O = ADP + phosphate + H(+). ATP-dependent RNA helicase involved in 40S ribosomal subunit biogenesis. Required for the processing and cleavage of 35S pre-rRNA at sites A0, A1, and A2, leading to mature 18S rRNA. The polypeptide is ATP-dependent RNA helicase CHR1 (CHR1) (Candida albicans (strain SC5314 / ATCC MYA-2876) (Yeast)).